The chain runs to 132 residues: MGITKRGAAWEWLHSWWMLFIFMPFAITSFFAFLFIGIKVRNRKWIMYGIIYFFIFAFGFVLPDLPGVFIVVPLWAVTIIHGFKVRPLYLIQLDVYKDHVEARAFAEARSEAESRFHAPKQSIQDIHIRKEQ.

3 consecutive transmembrane segments (helical) span residues 18 to 38 (MLFI…FIGI), 50 to 70 (IIYF…GVFI), and 71 to 91 (VVPL…LYLI).

Its subcellular location is the cell membrane. This is an uncharacterized protein from Bacillus subtilis (strain 168).